Here is a 208-residue protein sequence, read N- to C-terminus: High frequency lysogenization protein HflD homolog (208 aa).

The protein belongs to the HflD family.

The protein resides in the cytoplasm. Its subcellular location is the cell inner membrane. In Yersinia enterocolitica serotype O:8 / biotype 1B (strain NCTC 13174 / 8081), this protein is High frequency lysogenization protein HflD homolog.